The sequence spans 351 residues: Divinyl chlorophyll a/b light-harvesting protein PcbA (351 aa).

6 helical membrane-spanning segments follow: residues 27-47 (FIAA…AFTL), 64-84 (LIAL…GTFV), 89-109 (VTAI…GGLL), 202-222 (VMGG…FHIA), 242-262 (AILS…AFWC), and 305-325 (LTNV…WHAL).

The protein belongs to the PsbB/PsbC family. IsiA/Pcb subfamily. As to quaternary structure, the antenna complex consists of divinyl chlorophylls (a and b) and divinyl chlorophyll a/b binding proteins and binds more divinyl chlorophyll b than does the antenna complex from high-light-adapted Prochlorococcus. Divinyl chlorophyll a is required as a cofactor. Requires divinyl chlorophyll b as cofactor.

The protein resides in the cellular thylakoid membrane. Its function is as follows. The antenna complex functions as a light receptor, it captures and delivers excitation energy to photosystems II and I. The Prochlorales pcb genes are not related to higher plant LHCs. In Prochlorococcus marinus (strain SARG / CCMP1375 / SS120), this protein is Divinyl chlorophyll a/b light-harvesting protein PcbA (pcbA).